A 350-amino-acid chain; its full sequence is tRNA uridine(34) hydroxylase (350 aa).

One can recognise a Rhodanese domain in the interval 128–221; that stretch reads EETDYVMIDT…YMKEYPNDQF (94 aa). Cysteine 181 serves as the catalytic Cysteine persulfide intermediate.

It belongs to the TrhO family.

The enzyme catalyses uridine(34) in tRNA + AH2 + O2 = 5-hydroxyuridine(34) in tRNA + A + H2O. Functionally, catalyzes oxygen-dependent 5-hydroxyuridine (ho5U) modification at position 34 in tRNAs. The chain is tRNA uridine(34) hydroxylase from Bdellovibrio bacteriovorus (strain ATCC 15356 / DSM 50701 / NCIMB 9529 / HD100).